Here is a 96-residue protein sequence, read N- to C-terminus: Large ribosomal subunit protein eL21 (96 aa).

The tract at residues methionine 1–lysine 22 is disordered.

Belongs to the eukaryotic ribosomal protein eL21 family.

The sequence is that of Large ribosomal subunit protein eL21 from Methanosphaera stadtmanae (strain ATCC 43021 / DSM 3091 / JCM 11832 / MCB-3).